Consider the following 776-residue polypeptide: 3-isopropylmalate dehydratase (776 aa).

C357, C418, and C421 together coordinate [4Fe-4S] cluster. The span at 482–493 shows a compositional bias: basic and acidic residues; it reads SAPKVEVRHDTD. 2 disordered regions span residues 482 to 518 and 525 to 544; these read SAPK…SDVA and DIPV…SADA. The segment covering 527–538 has biased composition (polar residues); the sequence is PVSNSSTQSPGS.

It belongs to the aconitase/IPM isomerase family. In terms of assembly, monomer. It depends on [4Fe-4S] cluster as a cofactor.

The catalysed reaction is (2R,3S)-3-isopropylmalate = (2S)-2-isopropylmalate. The protein operates within amino-acid biosynthesis; L-leucine biosynthesis; L-leucine from 3-methyl-2-oxobutanoate: step 2/4. In terms of biological role, catalyzes the isomerization between 2-isopropylmalate and 3-isopropylmalate, via the formation of 2-isopropylmaleate. This chain is 3-isopropylmalate dehydratase (LEU1), found in Eremothecium gossypii (strain ATCC 10895 / CBS 109.51 / FGSC 9923 / NRRL Y-1056) (Yeast).